Reading from the N-terminus, the 329-residue chain is NADH-quinone oxidoreductase subunit H (329 aa).

Transmembrane regions (helical) follow at residues 9 to 29, 42 to 62, 75 to 95, 117 to 137, 154 to 174, 188 to 208, 238 to 258, 269 to 291, and 309 to 329; these read LIKI…ATYI, GPCY…IKLF, FIFT…MAPI, IGFL…ILAG, IQLL…LMVV, GGFL…FLIA, LKWG…SFVI, WGFI…LSMW, and WKIM…IILI.

It belongs to the complex I subunit 1 family. As to quaternary structure, NDH-1 is composed of 14 different subunits. Subunits NuoA, H, J, K, L, M, N constitute the membrane sector of the complex.

It localises to the cell inner membrane. The enzyme catalyses a quinone + NADH + 5 H(+)(in) = a quinol + NAD(+) + 4 H(+)(out). Functionally, NDH-1 shuttles electrons from NADH, via FMN and iron-sulfur (Fe-S) centers, to quinones in the respiratory chain. The immediate electron acceptor for the enzyme in this species is believed to be ubiquinone. Couples the redox reaction to proton translocation (for every two electrons transferred, four hydrogen ions are translocated across the cytoplasmic membrane), and thus conserves the redox energy in a proton gradient. This subunit may bind ubiquinone. The sequence is that of NADH-quinone oxidoreductase subunit H from Helicobacter pylori (strain ATCC 700392 / 26695) (Campylobacter pylori).